Consider the following 59-residue polypeptide: Embryonic testis differentiation protein homolog A (59 aa).

A compositionally biased stretch (basic and acidic residues) spans 1–10 (MDKEVPKGSP). Residues 1 to 25 (MDKEVPKGSPREPALNIKKSDKSFK) form a disordered region.

This is Embryonic testis differentiation protein homolog A from Homo sapiens (Human).